The following is a 307-amino-acid chain: Taste receptor type 2 member 41 (307 aa).

The Extracellular portion of the chain corresponds to 1–7; it reads MQAALTA. Residues 8-28 form a helical membrane-spanning segment; sequence FFMLLFSLLSLLGIAANGFIV. Over 29-40 the chain is Cytoplasmic; the sequence is LVLGREWLRYGR. A helical transmembrane segment spans residues 41–61; that stretch reads LLPLDMILISLGASRFCLQLV. The Extracellular portion of the chain corresponds to 62–88; that stretch reads GTVHNFYYSAQKVEYSGGLGRQFFHLH. Residues 89 to 109 traverse the membrane as a helical segment; it reads WHFLNSATFWFCSWLSVLFCV. The Cytoplasmic portion of the chain corresponds to 110-129; sequence KIANITHPTFLWLKWRFPAW. Residues 130–150 form a helical membrane-spanning segment; it reads VPWLLLGSVLISFIITLLFFW. Residues 151–183 are Extracellular-facing; that stretch reads VNYPAYQEFLIRKFSVNMTYKWNTRIETYYFPS. Asn-167 carries an N-linked (GlcNAc...) asparagine glycan. A helical transmembrane segment spans residues 184 to 204; it reads LKLVIWSIPFSVFLVSIMLLI. At 205–234 the chain is on the cytoplasmic side; the sequence is NSLRRHTQRMQHNGHSLQDPSTQAHTRALK. Residues 235–255 form a helical membrane-spanning segment; sequence SLISFLILYALSFLSLIIDAT. Residues 256 to 264 are Extracellular-facing; the sequence is KFISMQNDF. Residues 265–285 traverse the membrane as a helical segment; sequence YWPWQIAVYLCISIHPFILIF. The Cytoplasmic portion of the chain corresponds to 286-307; the sequence is SNLKLRSVFSQLLLLARGFWVA.

Belongs to the G-protein coupled receptor T2R family.

The protein localises to the membrane. Its function is as follows. Receptor that may play a role in the perception of bitterness and is gustducin-linked. May play a role in sensing the chemical composition of the gastrointestinal content. The activity of this receptor may stimulate alpha gustducin, mediate PLC-beta-2 activation and lead to the gating of TRPM5. This chain is Taste receptor type 2 member 41 (TAS2R41), found in Pan paniscus (Pygmy chimpanzee).